We begin with the raw amino-acid sequence, 454 residues long: Carbon catabolite repressor protein 4 homolog 5 (454 aa).

The disordered stretch occupies residues 1–76 (MSGYERKNTT…SLRRRRRTKE (76 aa)). Basic and acidic residues predominate over residues 31 to 41 (VYEKSNRKESI). The span at 61 to 75 (VRHSKSSLRRRRRTK) shows a compositional bias: basic residues. Residue Glu153 participates in Mg(2+) binding.

Belongs to the CCR4/nocturin family. Component of the CCR4-NOT complex, at least composed of CRR4 and CAF1 proteins. It depends on Mg(2+) as a cofactor.

It localises to the nucleus. Its subcellular location is the cytoplasm. The catalysed reaction is Exonucleolytic cleavage of poly(A) to 5'-AMP.. Acts as a catalytic component of the CCR4-NOT core complex, which in the nucleus seems to be a general transcription factor, and in the cytoplasm the major mRNA deadenylase involved in mRNA turnover. In Arabidopsis thaliana (Mouse-ear cress), this protein is Carbon catabolite repressor protein 4 homolog 5 (CCR4-5).